A 379-amino-acid polypeptide reads, in one-letter code: Protein-glutamate methylesterase/protein-glutamine glutaminase (379 aa).

Positions 4–121 constitute a Response regulatory domain; that stretch reads KVLVVDDSSF…AKNSDEAGSL (118 aa). A 4-aspartylphosphate modification is found at Asp55. Residues 185–379 form the CheB-type methylesterase domain; sequence SGKEYKLLAI…ASMVKEISRG (195 aa). Residues Ser197, His224, and Asp321 contribute to the active site.

It belongs to the CheB family. Phosphorylated by CheA. Phosphorylation of the N-terminal regulatory domain activates the methylesterase activity.

It localises to the cytoplasm. It carries out the reaction [protein]-L-glutamate 5-O-methyl ester + H2O = L-glutamyl-[protein] + methanol + H(+). The catalysed reaction is L-glutaminyl-[protein] + H2O = L-glutamyl-[protein] + NH4(+). Involved in chemotaxis. Part of a chemotaxis signal transduction system that modulates chemotaxis in response to various stimuli. Catalyzes the demethylation of specific methylglutamate residues introduced into the chemoreceptors (methyl-accepting chemotaxis proteins or MCP) by CheR. Also mediates the irreversible deamidation of specific glutamine residues to glutamic acid. The sequence is that of Protein-glutamate methylesterase/protein-glutamine glutaminase from Colwellia psychrerythraea (strain 34H / ATCC BAA-681) (Vibrio psychroerythus).